A 332-amino-acid polypeptide reads, in one-letter code: Transaldolase (332 aa).

Lys136 serves as the catalytic Schiff-base intermediate with substrate.

The protein belongs to the transaldolase family. Type 1 subfamily.

It is found in the cytoplasm. It carries out the reaction D-sedoheptulose 7-phosphate + D-glyceraldehyde 3-phosphate = D-erythrose 4-phosphate + beta-D-fructose 6-phosphate. It participates in carbohydrate degradation; pentose phosphate pathway; D-glyceraldehyde 3-phosphate and beta-D-fructose 6-phosphate from D-ribose 5-phosphate and D-xylulose 5-phosphate (non-oxidative stage): step 2/3. Functionally, transaldolase is important for the balance of metabolites in the pentose-phosphate pathway. The chain is Transaldolase from Nostoc sp. (strain PCC 7120 / SAG 25.82 / UTEX 2576).